The sequence spans 242 residues: Ferritin, mitochondrial (242 aa).

The transit peptide at M1–L49 directs the protein to the mitochondrion. A compositionally biased stretch (low complexity) spans R47–P58. The disordered stretch occupies residues R47 to N71. One can recognise a Ferritin-like diiron domain in the interval Q70–G219. Positions 87, 122, 125, 167, and 201 each coordinate Fe cation.

Belongs to the ferritin family. In terms of assembly, homooligomer of 24 subunits. The functional molecule is roughly spherical and contains a central cavity into which the polymeric mineral iron core is deposited. Detected in testis and erythroleukemia. Expression is very low or not detectable in brain, colon, heart, kidney, liver, lung, muscle, placental, spleen and small intestine.

It is found in the mitochondrion. The catalysed reaction is 4 Fe(2+) + O2 + 4 H(+) = 4 Fe(3+) + 2 H2O. Catalyzes the oxidation of ferrous iron(II) to ferric iron(III) and stores iron in a soluble, non-toxic, readily available form. Important for iron homeostasis. Iron is taken up in the ferrous form and deposited as ferric hydroxides after oxidation. This Homo sapiens (Human) protein is Ferritin, mitochondrial.